Reading from the N-terminus, the 281-residue chain is Ribosomal RNA small subunit methyltransferase A (281 aa).

S-adenosyl-L-methionine contacts are provided by Asn-36, Leu-38, Gly-63, Glu-84, Asp-109, and Asn-127.

The protein belongs to the class I-like SAM-binding methyltransferase superfamily. rRNA adenine N(6)-methyltransferase family. RsmA subfamily.

The protein localises to the cytoplasm. It carries out the reaction adenosine(1518)/adenosine(1519) in 16S rRNA + 4 S-adenosyl-L-methionine = N(6)-dimethyladenosine(1518)/N(6)-dimethyladenosine(1519) in 16S rRNA + 4 S-adenosyl-L-homocysteine + 4 H(+). Its function is as follows. Specifically dimethylates two adjacent adenosines (A1518 and A1519) in the loop of a conserved hairpin near the 3'-end of 16S rRNA in the 30S particle. May play a critical role in biogenesis of 30S subunits. The protein is Ribosomal RNA small subunit methyltransferase A of Borreliella burgdorferi (strain ATCC 35210 / DSM 4680 / CIP 102532 / B31) (Borrelia burgdorferi).